The chain runs to 69 residues: uncharacterized protein (69 aa).

Residues 1–18 (MAMLWISMFIIMRKYGRS) form the signal peptide. The interval 17 to 69 (RSSSSSSSSSSSSSSSSSSSSSSSSSSSSSSSSSSSSSSSSGSSSNSNRVVVV) is disordered. A compositionally biased stretch (low complexity) spans 18–61 (SSSSSSSSSSSSSSSSSSSSSSSSSSSSSSSSSSSSSSSSGSSS).

Its subcellular location is the secreted. This is an uncharacterized protein from Dictyostelium discoideum (Social amoeba).